We begin with the raw amino-acid sequence, 192 residues long: Putative BTB/POZ domain-containing protein At4g04090 (192 aa).

The 74-residue stretch at 23–96 (VDVRLMARDS…TYSDGSMLSE (74 aa)) folds into the BTB domain.

Its pathway is protein modification; protein ubiquitination. Its function is as follows. May act as a substrate-specific adapter of an E3 ubiquitin-protein ligase complex (CUL3-RBX1-BTB) which mediates the ubiquitination and subsequent proteasomal degradation of target proteins. This chain is Putative BTB/POZ domain-containing protein At4g04090, found in Arabidopsis thaliana (Mouse-ear cress).